We begin with the raw amino-acid sequence, 439 residues long: Proton pump-interactor 4 (439 aa).

Residues 286 to 354 (KEEKEIDEET…AKKKKAVCKS (69 aa)) adopt a coiled-coil conformation. The chain crosses the membrane as a helical span at residues 415 to 435 (LWVWTVSSAAVALPLALLVVF).

It belongs to the plant Proton pump-interactor protein family.

Its subcellular location is the cell membrane. The protein resides in the endoplasmic reticulum membrane. May regulate plasma membrane ATPase activity. This Arabidopsis thaliana (Mouse-ear cress) protein is Proton pump-interactor 4 (PPI4).